The primary structure comprises 345 residues: Nuclear distribution protein nudE-like 1 (345 aa).

Residues Gln-28–Val-190 adopt a coiled-coil conformation. The tract at residues Val-56 to Ser-166 is self-association. The segment at Asp-64–Glu-189 is interaction with KATNB1. A required for interaction with PAFAH1B1 region spans residues Tyr-114 to Ile-133. The segment at Arg-175–Val-345 is interaction with CENPF. The interaction with YWHAE stretch occupies residues Glu-189–Val-256. Residues Thr-191–Val-345 form an interaction with NEFL region. Positions Ala-195 to Val-256 are interaction with KATNA1. Ser-215 is subject to Phosphoserine. Thr-219 carries the phosphothreonine; by CDK1 and MAPK1 modification. Ser-231 carries the phosphoserine modification. An interaction with DISC1 region spans residues Thr-241–Gln-280. The residue at position 242 (Ser-242) is a Phosphoserine; by CDK1. Thr-245 is modified (phosphothreonine; by CDK1 and MAPK1). The segment at Val-256 to Val-291 is required for localization to the centrosome and interaction with dynein, dynactin, tubulin gamma, PCM1 and PCNT. The S-palmitoyl cysteine; by ZDHHC2, ZDHHC3 and ZDHHC7 moiety is linked to residue Cys-273. The segment at Gly-315 to Val-345 is disordered. Low complexity predominate over residues Leu-329 to Gly-339. Ser-344 is subject to Phosphoserine.

It belongs to the nudE family. As to quaternary structure, self-associates. Interacts with DISC1, dynein, dynactin, tubulin gamma, KATNA1, KATNB1, microtubules, PAFAH1B1, PCM1, PCNT, and YWHAE. Interacts directly with NEFL and indirectly with NEFH. Interacts (via C-terminus) with CENPF. Interacts with ZNF365. Interacts with PLEKHM1 (via N- and C-terminus). Interacts with GTP-bound RAB9A; the interaction may lead to RAB9A-dynein motor tethering. In terms of processing, phosphorylated in mitosis. Can be phosphorylated by CDK1, CDK5 and MAPK1. Phosphorylation by CDK5 promotes interaction with KATNA1 and YWHAE. Post-translationally, palmitoylation at Cys-273 reduces affinity for dynein.

The protein localises to the cytoplasm. It is found in the cytoskeleton. It localises to the microtubule organizing center. Its subcellular location is the centrosome. The protein resides in the chromosome. The protein localises to the centromere. It is found in the kinetochore. It localises to the spindle. Functionally, required for organization of the cellular microtubule array and microtubule anchoring at the centrosome. May regulate microtubule organization at least in part by targeting the microtubule severing protein KATNA1 to the centrosome. Also positively regulates the activity of the minus-end directed microtubule motor protein dynein. May enhance dynein-mediated microtubule sliding by targeting dynein to the microtubule plus ends. Required for several dynein- and microtubule-dependent processes such as the maintenance of Golgi integrity, the centripetal motion of secretory vesicles and the coupling of the nucleus and centrosome. Also required during brain development for the migration of newly formed neurons from the ventricular/subventricular zone toward the cortical plate. Plays a role, together with DISC1, in the regulation of neurite outgrowth. Required for mitosis in some cell types but appears to be dispensible for mitosis in cortical neuronal progenitors, which instead requires NDE1. Facilitates the polymerization of neurofilaments from the individual subunits NEFH and NEFL. Positively regulates lysosome peripheral distribution and ruffled border formation in osteoclasts. Plays a role, together with DISC1, in the regulation of neurite outgrowth. May act as a RAB9A/B effector that tethers RAB9-associated late endosomes to the dynein motor for their retrograde transport to the trans-Golgi network. The polypeptide is Nuclear distribution protein nudE-like 1 (NDEL1) (Pongo abelii (Sumatran orangutan)).